A 1008-amino-acid polypeptide reads, in one-letter code: Pre-mRNA-splicing factor SNU114 (1008 aa).

S85 is modified (phosphoserine). Phosphothreonine is present on T88. In terms of domain architecture, tr-type G spans 131–338; it reads ERIINVGVIG…SYYYAHSIPS (208 aa). The tract at residues 140–147 is G1; that stretch reads GPLHSGKT. GTP is bound at residue 140-147; sequence GPLHSGKT. Residues 188-192 are G2; that stretch reads GLSIK. The tract at residues 214 to 217 is G3; that stretch reads DAPG. GTP is bound by residues 214–218 and 268–271; these read DAPGH and NKLD. Residues 268-271 are G4; sequence NKLD. Residues 315-317 are G5; that stretch reads STK. A disordered region spans residues 504-536; it reads TSQSESRQKRQLHDISKTETSNEDEDEDDETPS. The span at 509–520 shows a compositional bias: basic and acidic residues; sequence SRQKRQLHDISK. Residues 524–536 are compositionally biased toward acidic residues; it reads SNEDEDEDDETPS.

The protein belongs to the TRAFAC class translation factor GTPase superfamily. Classic translation factor GTPase family. EF-G/EF-2 subfamily. Belongs to the CWC complex (or CEF1-associated complex), a spliceosome sub-complex reminiscent of a late-stage spliceosome composed of the U2, U5 and U6 snRNAs and at least BUD13, BUD31, BRR2, CDC40, CEF1, CLF1, CUS1, CWC2, CWC15, CWC21, CWC22, CWC23, CWC24, CWC25, CWC27, ECM2, HSH155, IST3, ISY1, LEA1, MSL1, NTC20, PRP8, PRP9, PRP11, PRP19, PRP21, PRP22, PRP45, PRP46, SLU7, SMB1, SMD1, SMD2, SMD3, SMX2, SMX3, SNT309, SNU114, SPP2, SYF1, SYF2, RSE1 and YJU2. Component of the U4/U6-U5 tri-snRNP complex composed of the U4, U6 and U5 snRNAs and at least PRP3, PRP4, PRP6, PRP8, PRP18, PRP31, PRP38, SNU13, SNU23, SNU66, SNU114, SPP381, SMB1, SMD1, SMD2, SMD3, SMX2, SMX3, LSM2, LSM3, LSM4, LSM5, LSM6, LSM7, LSM8, BRR2 and DIB1. Interacts (via C-terminus) with CWC21. Interacts (via N-terminus) with PRP8 (via SCwid domain).

The protein resides in the nucleus. Its function is as follows. Component of the U5 snRNP complex required for pre-mRNA splicing. Binds GTP. The polypeptide is Pre-mRNA-splicing factor SNU114 (SNU114) (Saccharomyces cerevisiae (strain ATCC 204508 / S288c) (Baker's yeast)).